A 373-amino-acid chain; its full sequence is GTPase Obg (373 aa).

The 159-residue stretch at 1–159 (MKFIDEARIE…RMVRLELKVL (159 aa)) folds into the Obg domain. The segment at 128-147 (LHFKSSTNRAPRQKTDGKPG) is disordered. The 175-residue stretch at 160 to 334 (ADVGLLGMPN…LCYAVFDHIS (175 aa)) folds into the OBG-type G domain. GTP contacts are provided by residues 166 to 173 (GMPNAGKS), 191 to 195 (FTTLA), 213 to 216 (DIPG), 284 to 287 (NKLD), and 315 to 317 (SAL). Residues serine 173 and threonine 193 each coordinate Mg(2+). The tract at residues 354–373 (FREKPQAPAAADDAGTDPQV) is disordered. Residues 359–373 (QAPAAADDAGTDPQV) show a composition bias toward low complexity.

It belongs to the TRAFAC class OBG-HflX-like GTPase superfamily. OBG GTPase family. As to quaternary structure, monomer. It depends on Mg(2+) as a cofactor.

The protein localises to the cytoplasm. An essential GTPase which binds GTP, GDP and possibly (p)ppGpp with moderate affinity, with high nucleotide exchange rates and a fairly low GTP hydrolysis rate. Plays a role in control of the cell cycle, stress response, ribosome biogenesis and in those bacteria that undergo differentiation, in morphogenesis control. This chain is GTPase Obg, found in Paraburkholderia phytofirmans (strain DSM 17436 / LMG 22146 / PsJN) (Burkholderia phytofirmans).